The sequence spans 150 residues: MLGAALRRCAVAATSRAGPRGLLHSAPNPGPAAAIQSVRCYSHGSSETDEEFDARWVTYFNKPDIDAWELRKGINTLVTYDLVPEPKIIDAALRACRRLNDFASTVRILEAVKDKAGPHKEIYPYVIQELRPTLNELGISTPEELGLDKV.

The transit peptide at 1-41 (MLGAALRRCAVAATSRAGPRGLLHSAPNPGPAAAIQSVRCY) directs the protein to the mitochondrion. An SIFI-degron motif is present at residues 2–17 (LGAALRRCAVAATSRA). N6-acetyllysine is present on residues Lys87 and Lys113. Position 141 is a phosphothreonine (Thr141).

The protein belongs to the cytochrome c oxidase subunit 5A family. Component of the cytochrome c oxidase (complex IV, CIV), a multisubunit enzyme composed of 14 subunits. The complex is composed of a catalytic core of 3 subunits MT-CO1, MT-CO2 and MT-CO3, encoded in the mitochondrial DNA, and 11 supernumerary subunits COX4I, COX5A, COX5B, COX6A, COX6B, COX6C, COX7A, COX7B, COX7C, COX8 and NDUFA4, which are encoded in the nuclear genome. The complex exists as a monomer or a dimer and forms supercomplexes (SCs) in the inner mitochondrial membrane with NADH-ubiquinone oxidoreductase (complex I, CI) and ubiquinol-cytochrome c oxidoreductase (cytochrome b-c1 complex, complex III, CIII), resulting in different assemblies (supercomplex SCI(1)III(2)IV(1) and megacomplex MCI(2)III(2)IV(2)). Interacts with AFG1L. Interacts with RAB5IF. In response to mitochondrial stress, the precursor protein is ubiquitinated by the SIFI complex in the cytoplasm before mitochondrial import, leading to its degradation. Within the SIFI complex, UBR4 initiates ubiquitin chain that are further elongated or branched by KCMF1.

Its subcellular location is the mitochondrion inner membrane. Its pathway is energy metabolism; oxidative phosphorylation. Its function is as follows. Component of the cytochrome c oxidase, the last enzyme in the mitochondrial electron transport chain which drives oxidative phosphorylation. The respiratory chain contains 3 multisubunit complexes succinate dehydrogenase (complex II, CII), ubiquinol-cytochrome c oxidoreductase (cytochrome b-c1 complex, complex III, CIII) and cytochrome c oxidase (complex IV, CIV), that cooperate to transfer electrons derived from NADH and succinate to molecular oxygen, creating an electrochemical gradient over the inner membrane that drives transmembrane transport and the ATP synthase. Cytochrome c oxidase is the component of the respiratory chain that catalyzes the reduction of oxygen to water. Electrons originating from reduced cytochrome c in the intermembrane space (IMS) are transferred via the dinuclear copper A center (CU(A)) of subunit 2 and heme A of subunit 1 to the active site in subunit 1, a binuclear center (BNC) formed by heme A3 and copper B (CU(B)). The BNC reduces molecular oxygen to 2 water molecules using 4 electrons from cytochrome c in the IMS and 4 protons from the mitochondrial matrix. The sequence is that of Cytochrome c oxidase subunit 5A, mitochondrial (COX5A) from Saguinus labiatus (Red-chested mustached tamarin).